Here is a 404-residue protein sequence, read N- to C-terminus: Phosphopentomutase (404 aa).

The Mn(2+) site is built by Asp-10, Asp-303, His-308, Asp-344, His-345, and His-356.

This sequence belongs to the phosphopentomutase family. Requires Mn(2+) as cofactor.

The protein resides in the cytoplasm. The enzyme catalyses 2-deoxy-alpha-D-ribose 1-phosphate = 2-deoxy-D-ribose 5-phosphate. It carries out the reaction alpha-D-ribose 1-phosphate = D-ribose 5-phosphate. It functions in the pathway carbohydrate degradation; 2-deoxy-D-ribose 1-phosphate degradation; D-glyceraldehyde 3-phosphate and acetaldehyde from 2-deoxy-alpha-D-ribose 1-phosphate: step 1/2. Its function is as follows. Isomerase that catalyzes the conversion of deoxy-ribose 1-phosphate (dRib-1-P) and ribose 1-phosphate (Rib-1-P) to deoxy-ribose 5-phosphate (dRib-5-P) and ribose 5-phosphate (Rib-5-P), respectively. This Shewanella sp. (strain ANA-3) protein is Phosphopentomutase.